Consider the following 165-residue polypeptide: Small ribosomal subunit protein uS5 (165 aa).

Positions L13 to I76 constitute an S5 DRBM domain.

It belongs to the universal ribosomal protein uS5 family. In terms of assembly, part of the 30S ribosomal subunit. Contacts proteins S4 and S8.

With S4 and S12 plays an important role in translational accuracy. In terms of biological role, located at the back of the 30S subunit body where it stabilizes the conformation of the head with respect to the body. This is Small ribosomal subunit protein uS5 from Chlamydia abortus (strain DSM 27085 / S26/3) (Chlamydophila abortus).